Reading from the N-terminus, the 152-residue chain is Heavy metal-associated isoprenylated plant protein 22 (152 aa).

Positions 28–91 constitute an HMA domain; it reads MQTVNIKVKI…TVQSTGKKKA (64 aa). The a metal cation site is built by cysteine 39 and cysteine 42. The tract at residues 123 to 152 is disordered; it reads SEQAQAQPGSTDDKLMSLFSDENPNACTVM. The segment covering 142–152 has biased composition (polar residues); it reads SDENPNACTVM. Cysteine 149 is modified (cysteine methyl ester). A lipid anchor (S-farnesyl cysteine) is attached at cysteine 149. A propeptide spans 150–152 (removed in mature form); the sequence is TVM.

Belongs to the HIPP family. As to quaternary structure, interacts with ZHD11/HB29. In terms of tissue distribution, expressed in lateral roots and mature anthers.

The protein localises to the membrane. Functionally, heavy-metal-binding protein. Binds cadmium. May be involved in cadmium transport and play a role in cadmium detoxification. The polypeptide is Heavy metal-associated isoprenylated plant protein 22 (Arabidopsis thaliana (Mouse-ear cress)).